Consider the following 473-residue polypeptide: Putative BTB/POZ domain-containing protein R765 (473 aa).

Positions 2-72 (TNIQLVIKDD…KIYDREITAD (71 aa)) constitute a BTB domain.

This sequence belongs to the mimivirus BTB/WD family.

The chain is Putative BTB/POZ domain-containing protein R765 from Acanthamoeba polyphaga mimivirus (APMV).